The following is a 41-amino-acid chain: Hemoglobin subunit beta (41 aa).

Residues 1–41 (LGNVLVCVLAHHFGKEFTPQVQAAYQKVVAGVANALAHKYH) enclose the Globin domain. Lys-39 bears the N6-acetyllysine mark.

Belongs to the globin family. Heterotetramer of two alpha chains and two beta chains. In terms of tissue distribution, red blood cells.

Involved in oxygen transport from the lung to the various peripheral tissues. In Colobus guereza (Mantled guereza), this protein is Hemoglobin subunit beta (HBB).